A 473-amino-acid polypeptide reads, in one-letter code: Knob-associated histidine-rich protein (473 aa).

A signal peptide spans 1 to 34 (MKSFKNKNTLRRKKAFPVFTKILLVSFLVWVLKC). Asn42 carries an N-linked (GlcNAc...) asparagine glycan. The segment covering 57-87 (AQKQHEHHHHHHHQHQHQHQAPHQAHHHHHH) has biased composition (basic residues). Disordered regions lie at residues 57–143 (AQKQ…QVFR) and 347–473 (SSVN…DGSK). Positions 95–104 (PQVHQQVHGQ) are enriched in low complexity. Over residues 108-117 (HHHHHHHHHQ) the composition is skewed to basic residues. 2 stretches are compositionally biased toward basic and acidic residues: residues 354-375 (KHGD…EGEK) and 396-405 (KDNEDAESVK). The segment covering 406–422 (SKKHKSHDCEKKKSKKH) has biased composition (basic residues). 2 stretches are compositionally biased toward basic and acidic residues: residues 423 to 444 (KDNE…GEKH) and 453 to 473 (KTNE…DGSK).

It localises to the secreted. KAHRP might mimick human histidine-rich glycoproteins to anchor host thrombospondin or a parasite analog in a binding complex with the endothelial cell receptor. The chain is Knob-associated histidine-rich protein from Plasmodium falciparum.